A 106-amino-acid polypeptide reads, in one-letter code: Nucleoid-associated protein XC_3243 (106 aa).

The tract at residues 82 to 106 (DAESKERMGSATAGMQLPPGMKLPF) is disordered.

It belongs to the YbaB/EbfC family. In terms of assembly, homodimer.

The protein localises to the cytoplasm. Its subcellular location is the nucleoid. In terms of biological role, binds to DNA and alters its conformation. May be involved in regulation of gene expression, nucleoid organization and DNA protection. In Xanthomonas campestris pv. campestris (strain 8004), this protein is Nucleoid-associated protein XC_3243.